A 243-amino-acid polypeptide reads, in one-letter code: Probable fructoselysine utilization operon transcriptional repressor (243 aa).

The HTH gntR-type domain occupies 10-78; that stretch reads QLLYATVRQR…QGKGTFVQSQ (69 aa). The segment at residues 38 to 57 is a DNA-binding region (H-T-H motif); sequence ENELCTQYNVSRITIRKAIS.

It participates in carbohydrate metabolism; fructoselysine degradation [regulation]. May regulate the transcription of the frlABCDR operon, involved in the utilization of fructoselysine and psicoselysine. The sequence is that of Probable fructoselysine utilization operon transcriptional repressor from Escherichia coli (strain K12).